A 298-amino-acid chain; its full sequence is Lipoyl synthase (298 aa).

[4Fe-4S] cluster contacts are provided by C43, C48, C54, C69, C73, C76, and S280. The Radical SAM core domain maps to 55–269; it reads FSSGTATFLI…AACGRGMGIP (215 aa).

It belongs to the radical SAM superfamily. Lipoyl synthase family. It depends on [4Fe-4S] cluster as a cofactor.

Its subcellular location is the cytoplasm. The catalysed reaction is [[Fe-S] cluster scaffold protein carrying a second [4Fe-4S](2+) cluster] + N(6)-octanoyl-L-lysyl-[protein] + 2 oxidized [2Fe-2S]-[ferredoxin] + 2 S-adenosyl-L-methionine + 4 H(+) = [[Fe-S] cluster scaffold protein] + N(6)-[(R)-dihydrolipoyl]-L-lysyl-[protein] + 4 Fe(3+) + 2 hydrogen sulfide + 2 5'-deoxyadenosine + 2 L-methionine + 2 reduced [2Fe-2S]-[ferredoxin]. It participates in protein modification; protein lipoylation via endogenous pathway; protein N(6)-(lipoyl)lysine from octanoyl-[acyl-carrier-protein]: step 2/2. Catalyzes the radical-mediated insertion of two sulfur atoms into the C-6 and C-8 positions of the octanoyl moiety bound to the lipoyl domains of lipoate-dependent enzymes, thereby converting the octanoylated domains into lipoylated derivatives. In Nitratidesulfovibrio vulgaris (strain DP4) (Desulfovibrio vulgaris), this protein is Lipoyl synthase.